The chain runs to 302 residues: UDP-3-O-acyl-N-acetylglucosamine deacetylase (302 aa).

Residues His-82, His-238, and Asp-242 each contribute to the Zn(2+) site. His-265 functions as the Proton donor in the catalytic mechanism.

Belongs to the LpxC family. Zn(2+) serves as cofactor.

The catalysed reaction is a UDP-3-O-[(3R)-3-hydroxyacyl]-N-acetyl-alpha-D-glucosamine + H2O = a UDP-3-O-[(3R)-3-hydroxyacyl]-alpha-D-glucosamine + acetate. It functions in the pathway glycolipid biosynthesis; lipid IV(A) biosynthesis; lipid IV(A) from (3R)-3-hydroxytetradecanoyl-[acyl-carrier-protein] and UDP-N-acetyl-alpha-D-glucosamine: step 2/6. Its function is as follows. Catalyzes the hydrolysis of UDP-3-O-myristoyl-N-acetylglucosamine to form UDP-3-O-myristoylglucosamine and acetate, the committed step in lipid A biosynthesis. This Leptospira biflexa serovar Patoc (strain Patoc 1 / Ames) protein is UDP-3-O-acyl-N-acetylglucosamine deacetylase.